Consider the following 348-residue polypeptide: Dihydroorotase (348 aa).

His17 and His19 together coordinate Zn(2+). Substrate is bound by residues 19 to 21 (HLR) and Asn45. The Zn(2+) site is built by Lys103, His140, and His178. The residue at position 103 (Lys103) is an N6-carboxylysine. Position 140 (His140) interacts with substrate. Leu223 provides a ligand contact to substrate. Asp251 contributes to the Zn(2+) binding site. Asp251 is an active-site residue. The substrate site is built by His255 and Ala267.

It belongs to the metallo-dependent hydrolases superfamily. DHOase family. Class II DHOase subfamily. In terms of assembly, homodimer. It depends on Zn(2+) as a cofactor.

It catalyses the reaction (S)-dihydroorotate + H2O = N-carbamoyl-L-aspartate + H(+). The protein operates within pyrimidine metabolism; UMP biosynthesis via de novo pathway; (S)-dihydroorotate from bicarbonate: step 3/3. Catalyzes the reversible cyclization of carbamoyl aspartate to dihydroorotate. This chain is Dihydroorotase, found in Escherichia coli O6:H1 (strain CFT073 / ATCC 700928 / UPEC).